The chain runs to 390 residues: Probable tRNA sulfurtransferase (390 aa).

A THUMP domain is found at 60–162 (KQIIDDLKEV…YDCAIVYGHK (103 aa)). ATP contacts are provided by residues 180–181 (LL), 205–206 (TF), arginine 264, glycine 286, and glutamine 295.

The protein belongs to the ThiI family.

The protein resides in the cytoplasm. It carries out the reaction [ThiI sulfur-carrier protein]-S-sulfanyl-L-cysteine + a uridine in tRNA + 2 reduced [2Fe-2S]-[ferredoxin] + ATP + H(+) = [ThiI sulfur-carrier protein]-L-cysteine + a 4-thiouridine in tRNA + 2 oxidized [2Fe-2S]-[ferredoxin] + AMP + diphosphate. The catalysed reaction is [ThiS sulfur-carrier protein]-C-terminal Gly-Gly-AMP + S-sulfanyl-L-cysteinyl-[cysteine desulfurase] + AH2 = [ThiS sulfur-carrier protein]-C-terminal-Gly-aminoethanethioate + L-cysteinyl-[cysteine desulfurase] + A + AMP + 2 H(+). It functions in the pathway cofactor biosynthesis; thiamine diphosphate biosynthesis. Functionally, catalyzes the ATP-dependent transfer of a sulfur to tRNA to produce 4-thiouridine in position 8 of tRNAs, which functions as a near-UV photosensor. Also catalyzes the transfer of sulfur to the sulfur carrier protein ThiS, forming ThiS-thiocarboxylate. This is a step in the synthesis of thiazole, in the thiamine biosynthesis pathway. The sulfur is donated as persulfide by IscS. The chain is Probable tRNA sulfurtransferase from Ureaplasma parvum serovar 3 (strain ATCC 27815 / 27 / NCTC 11736).